Reading from the N-terminus, the 156-residue chain is CASP-like protein 5C1 (156 aa).

Residues 1–24 (MENRERAGAGAVGSAGSLGLRVEQ) are Cytoplasmic-facing. The chain crosses the membrane as a helical span at residues 25 to 45 (AVFSSASLLFMSVGVEFFSYT). A topological domain (extracellular) is located at residue Ala-46. A helical membrane pass occupies residues 47 to 67 (FCFLVTIMGLVIPWSCTLAMI). Over 68 to 81 (DVYSILVGCPLRVP) the chain is Cytoplasmic. Residues 82–102 (GVMVIVVIGDWVLAILSLAAA) form a helical membrane-spanning segment. Over 103-132 (SSSAAVIDLLLQFHGSHCSPRFCGRYQLSA) the chain is Extracellular. Residues 133-153 (MMAFLSWFLTAASSLFNLWFI) form a helical membrane-spanning segment. Residues 154-156 (ASR) are Cytoplasmic-facing.

The protein belongs to the Casparian strip membrane proteins (CASP) family. As to quaternary structure, homodimer and heterodimers.

It localises to the cell membrane. This chain is CASP-like protein 5C1, found in Oryza sativa subsp. indica (Rice).